The sequence spans 72 residues: DNA-directed RNA polymerase subunit omega (72 aa).

It belongs to the RNA polymerase subunit omega family. The RNAP catalytic core consists of 2 alpha, 1 beta, 1 beta' and 1 omega subunit. When a sigma factor is associated with the core the holoenzyme is formed, which can initiate transcription.

The catalysed reaction is RNA(n) + a ribonucleoside 5'-triphosphate = RNA(n+1) + diphosphate. Promotes RNA polymerase assembly. Latches the N- and C-terminal regions of the beta' subunit thereby facilitating its interaction with the beta and alpha subunits. The polypeptide is DNA-directed RNA polymerase subunit omega (Petrotoga mobilis (strain DSM 10674 / SJ95)).